The sequence spans 487 residues: Putative sugar kinase YoaC (487 aa).

The protein belongs to the FGGY kinase family.

The chain is Putative sugar kinase YoaC (yoaC) from Bacillus subtilis (strain 168).